The sequence spans 686 residues: MTVGKLMIGLLIPILVATVYAEGSPAGSKRHEKFIPMVAFSCGYRNQYMTEEGSWKTDDERYATCFSGKLDILKYCRKAYPSMNITNIVEYSHEVSISDWCREEGSPCKWTHSVRPYHCIDGEFHSEALQVPHDCQFSHVNSRDQCNDYQHWKDEAGKQCKTKKSKGNKDMIVRSFAVLEPCALDMFTGVEFVCCPNDQTNKTDVQKTKEDEDDDDDEDDAYEDDYSEESDEKDEEEPSSQDPYFKIANWTNEHDDFKKAEMRMDEKHRKKVDKVMKEWGDLETRYNEQKAKDPKGAEKFKSQMNARFQKTVSSLEEEHKRMRKEIEAVHEERVQAMLNEKKRDATHDYRQALATHVNKPNKHSVLQSLKAYIRAEEKDRMHTLNRYRHLLKADSKEAAAYKPTVIHRLRYIDLRINGTLAMLRDFPDLEKYVRPIAVTYWKDYRDEVSPDISVEDSELTPIIHDDEFSKNAKLDVKAPTTTAKPVKETDNAKVLPTEASDSEEEADEYYEDEDDEQVKKTPDMKKKVKVVDIKPKEIKVTIEEEKKAPKLVETSVQTDDEDDDEDSSSSTSSESDEDEDKNIKELRVDIEPIIDEPASFYRHDKLIQSPEVERSASSVFQPYVLASAMFITAICIIAFAITNARRRRAMRGFIEVDVYTPEERHVAGMQVNGYENPTYSFFDSKA.

The signal sequence occupies residues 1-21 (MTVGKLMIGLLIPILVATVYA). Residues 22-621 (EGSPAGSKRH…VERSASSVFQ (600 aa)) are Extracellular-facing. The tract at residues 32 to 125 (EKFIPMVAFS…PYHCIDGEFH (94 aa)) is GFLD subdomain. In terms of domain architecture, E1 spans 32–197 (EKFIPMVAFS…TGVEFVCCPN (166 aa)). Intrachain disulfides connect C42–C65, C76–C119, C101–C108, C135–C195, C146–C182, and C160–C194. N-linked (GlcNAc...) asparagine glycosylation is present at N84. Residues 133-197 (HDCQFSHVNS…TGVEFVCCPN (65 aa)) are cuBD subdomain. N-linked (GlcNAc...) asparagine glycosylation occurs at N201. Residues 201–245 (NKTDVQKTKEDEDDDDDEDDAYEDDYSEESDEKDEEEPSSQDPYF) form a disordered region. The span at 211–239 (DEDDDDDEDDAYEDDYSEESDEKDEEEPS) shows a compositional bias: acidic residues. The 201-residue stretch at 240–440 (SQDPYFKIAN…KYVRPIAVTY (201 aa)) folds into the E2 domain. Residue N249 is glycosylated (N-linked (GlcNAc...) asparagine). Heparin-binding positions include 252–255 (NEHD) and H382. A glycan (N-linked (GlcNAc...) asparagine) is linked at N417. Disordered regions lie at residues 479–526 (PTTT…DMKK) and 550–585 (KLVE…NIKE). The segment covering 500 to 516 (SDSEEEADEYYEDEDDE) has biased composition (acidic residues). Positions 517–526 (QVKKTPDMKK) are enriched in basic and acidic residues. Positions 558 to 567 (TDDEDDDEDS) are enriched in acidic residues. Residues 622–642 (PYVLASAMFITAICIIAFAIT) form a helical membrane-spanning segment. At 643–686 (NARRRRAMRGFIEVDVYTPEERHVAGMQVNGYENPTYSFFDSKA) the chain is on the cytoplasmic side. Residues 674–679 (YENPTY) carry the YENPXY motif motif.

Belongs to the APP family. Interacts (via cytoplasmic domain) with feh-1 (via PID 2 domain). Post-translationally, extracellular region is proteolytically cleaved. As to expression, expressed in the head, pharynx, spermatheca, uterus, vulva, tail and ventral neurons. Specifically expressed in nerve ring interneurons, the ventral cord, socket and amphids in the head, with strong expression in junctional cells, including the pharyngeal intestinal valve and uterine seam junction, and the excretory cell and weak expression in epidermal epithelial cells, including hyp7 cells, vulval cells, rectal valve cells, pharyngeal arcade cells and the tail hypodermis.

It is found in the membrane. The protein localises to the early endosome. Its function is as follows. Required for normal developmental progression throughout all life stages. Specifically required for the molt stage during all larval transitions and morphogenesis. Acts with heterochronic genes, including members of the let-7 family, to regulate larval stage to adult transition. Acts synergistically with acn-1 in let-7 regulated postembryonic cell division of hypodermal seam cells. Acts in multiple pathways to influence daf-12 and daf-16 activity to in turn regulate physiological and reproductive processes such as body size and egg-laying. May play a role in neurotransmission. This Caenorhabditis elegans protein is Amyloid-beta-like protein.